Here is a 418-residue protein sequence, read N- to C-terminus: Voltage-gated ClC-type chloride channel ClcB (418 aa).

Residues 1–4 (MFRR) lie on the Cytoplasmic side of the membrane. Residues 5 to 25 (LLIATVVGILAAFAVAGFRHA) traverse the membrane as a helical segment. Residues 26–53 (MLLLEWLFLNNDSGSLVNAATNLSPWRR) are Periplasmic-facing. A helical membrane pass occupies residues 54–74 (LLTPALGGLAAGLLLMGWQKF). At 75 to 145 (TQQRPHAPTD…QRFTPRQEWK (71 aa)) the chain is on the cytoplasmic side. The chain crosses the membrane as a helical span at residues 146–166 (LWIACGAAAGMAAAYRAPLAG). At 167–177 (SLFIAEVLFGT) the chain is on the periplasmic side. Residues 178–200 (MMLASLGPVIISAVVALLVSNLI) form a helical membrane-spanning segment. Topologically, residues 201 to 221 (NHSDALLYSVQLSVTVQARDY) are cytoplasmic. A helical transmembrane segment spans residues 222 to 242 (ALIISTGVLAGLCGPLLLTLM). Residues 243 to 257 (NACHRGFVSLKLAPP) lie on the Periplasmic side of the membrane. A helical membrane pass occupies residues 258 to 278 (WQLALGGLIVGLLSLFTPAVW). The Cytoplasmic portion of the chain corresponds to 279-290 (GNGYSTVQSFLT). A helical membrane pass occupies residues 291-311 (APPLLMIIAGIFLCKLCAVLA). Over 312 to 315 (SSGS) the chain is Periplasmic. Residues 316–336 (GAPGGVFTPTLFIGLAIGMLY) traverse the membrane as a helical segment. Residues 337-351 (GRSLGLWFPDGEEIT) are Cytoplasmic-facing. A helical membrane pass occupies residues 352–372 (LLLGLTGMATLLAATTHAPIM). Over 373-379 (STLMICE) the chain is Periplasmic. Residues 380–400 (MTGEYQLLPGLLIACVIASVI) traverse the membrane as a helical segment. Over 401–418 (SRTLHRDSIYRQHTAQHS) the chain is Cytoplasmic.

The protein belongs to the chloride channel (TC 2.A.49) family. ClcB subfamily.

The protein resides in the cell inner membrane. In terms of biological role, probably acts as an electrical shunt for an outwardly-directed proton pump that is linked to amino acid decarboxylation, as part of the extreme acid resistance (XAR) response. The sequence is that of Voltage-gated ClC-type chloride channel ClcB (clcB) from Escherichia coli O157:H7.